The following is a 452-amino-acid chain: MTTSAPTEKLPLYRSLYFQVVCAVIAGVALGYFYPSVGESMKPLGDGFIKLIKMMIAPIIFCTVVVGIAGMEDMKKVGKTGGLALLYFEVVSTFALIIGLLLVNLFQPGAGMNIDAATLDTKSIAAYTGPGKMVSTTDFILNVIPTAFVDAFAKGEILQVLLLAILFGFALHRFGGRGTLVFDMIEKSSHVLFTIVGFIMKVAPIGAFGAMAFTIGKYGVGSLFSLGKLMGAFYLTCLIFIFGVLGAIARIHGFSVWKFIKYIKEELLIVLGTSSSESVLPRMMEKMENLGAKKTTVGLVIPTGYSFNLDGTSIYLTMAAVFIAQATNTPMTLMQEITLLGVLLLTSKGAAGVTGSGFIVLAATLSAVGTVPVAGLALILGIDRFMSEARALTNLIGNGVATLVVAKWTNELDMERLQAGLNNETWEEAQEPERVLDKKTEHMPVSAMSDAG.

9 consecutive transmembrane segments (helical) span residues 18–38, 51–71, 83–103, 151–171, 191–211, 229–249, 304–324, 337–357, and 359–379; these read FQVVCAVIAGVALGYFYPSVG, LIKMMIAPIIFCTVVVGIAGM, LALLYFEVVSTFALIIGLLLV, AFAKGEILQVLLLAILFGFAL, VLFTIVGFIMKVAPIGAFGAM, LMGAFYLTCLIFIFGVLGAIA, GYSFNLDGTSIYLTMAAVFIA, ITLLGVLLLTSKGAAGVTGSG, and IVLAATLSAVGTVPVAGLALI. Residues 426–452 form a disordered region; sequence WEEAQEPERVLDKKTEHMPVSAMSDAG. Over residues 431–442 the composition is skewed to basic and acidic residues; that stretch reads EPERVLDKKTEH.

The protein belongs to the dicarboxylate/amino acid:cation symporter (DAACS) (TC 2.A.23) family.

Its subcellular location is the cell inner membrane. Functionally, responsible for the transport of dicarboxylates such as succinate, fumarate, and malate from the periplasm across the membrane. The sequence is that of C4-dicarboxylate transport protein 1 from Polaromonas naphthalenivorans (strain CJ2).